A 247-amino-acid chain; its full sequence is Ribosomal RNA large subunit methyltransferase E (247 aa).

The segment at 1-21 (MKVNPKNSPKDNLKDSPKVSA) is disordered. Over residues 8–17 (SPKDNLKDSP) the composition is skewed to basic and acidic residues. G80, W82, D108, D124, and D153 together coordinate S-adenosyl-L-methionine. The active-site Proton acceptor is K193.

Belongs to the class I-like SAM-binding methyltransferase superfamily. RNA methyltransferase RlmE family.

It is found in the cytoplasm. The catalysed reaction is uridine(2552) in 23S rRNA + S-adenosyl-L-methionine = 2'-O-methyluridine(2552) in 23S rRNA + S-adenosyl-L-homocysteine + H(+). Specifically methylates the uridine in position 2552 of 23S rRNA at the 2'-O position of the ribose in the fully assembled 50S ribosomal subunit. The protein is Ribosomal RNA large subunit methyltransferase E of Polaromonas sp. (strain JS666 / ATCC BAA-500).